Reading from the N-terminus, the 196-residue chain is MKVAVIKYNAGNIRSVDYALKRLGVEAVITSDKEVLKAADKVIFPGVGEAETTMLHLKESGMDRFIKELRQPVLGICLGMQLMCRFSEEGNVDCLGIFDTDVKRFAPRKHEEKVPHMGWNTISCLKSDLFKGFTRDEFVYFVHSYYVPVSEFTAAETDYIRPFSAALHKDNFYATQFHPEKSGEAGERIIKNFLEL.

In terms of domain architecture, Glutamine amidotransferase type-1 spans 2–196; the sequence is KVAVIKYNAG…ERIIKNFLEL (195 aa). Cys77 functions as the Nucleophile in the catalytic mechanism. Active-site residues include His178 and Glu180.

Heterodimer of HisH and HisF.

It localises to the cytoplasm. It catalyses the reaction 5-[(5-phospho-1-deoxy-D-ribulos-1-ylimino)methylamino]-1-(5-phospho-beta-D-ribosyl)imidazole-4-carboxamide + L-glutamine = D-erythro-1-(imidazol-4-yl)glycerol 3-phosphate + 5-amino-1-(5-phospho-beta-D-ribosyl)imidazole-4-carboxamide + L-glutamate + H(+). It carries out the reaction L-glutamine + H2O = L-glutamate + NH4(+). It participates in amino-acid biosynthesis; L-histidine biosynthesis; L-histidine from 5-phospho-alpha-D-ribose 1-diphosphate: step 5/9. IGPS catalyzes the conversion of PRFAR and glutamine to IGP, AICAR and glutamate. The HisH subunit catalyzes the hydrolysis of glutamine to glutamate and ammonia as part of the synthesis of IGP and AICAR. The resulting ammonia molecule is channeled to the active site of HisF. The polypeptide is Imidazole glycerol phosphate synthase subunit HisH (Bacteroides fragilis (strain YCH46)).